The chain runs to 402 residues: Potassium channel subfamily K member 9 (402 aa).

The Cytoplasmic segment spans residues M1 to T8. Residues L9 to L29 form a helical membrane-spanning segment. Topologically, residues E30–I88 are extracellular. The N-linked (GlcNAc...) asparagine glycan is linked to N53. The pore-forming intramembrane region spans T89–P101. Residues T93, I94, G95, and Y96 each contribute to the K(+) site. The tract at residues T93–H98 is selectivity filter 1. Over G102–K107 the chain is Extracellular. A helical membrane pass occupies residues A108–L128. Over G129–N158 the chain is Cytoplasmic. The helical transmembrane segment at M159–S179 threads the bilayer. Residues Q180–F194 are Extracellular-facing. Positions I195–A207 form an intramembrane region, pore-forming. K(+)-binding residues include T199, I200, G201, and F202. Positions T199–D204 are selectivity filter 2. Topologically, residues L208 to P218 are extracellular. The chain crosses the membrane as a helical span at residues F219–L239. The Cytoplasmic portion of the chain corresponds to N240 to I402. Positions V243 to T248 are X-gate.

This sequence belongs to the two pore domain potassium channel (TC 1.A.1.8) family. As to quaternary structure, homodimer. Heterodimer with KCNK1. Heterodimer with KCNK3. Expressed in adrenal glands mainly in outer zona glomerulosa and inner zona medullaris. Expressed in retinal ganglion cells. Expressed in dentate gyrus (at protein level).

The protein resides in the cell membrane. Its subcellular location is the mitochondrion inner membrane. It is found in the cell projection. It localises to the dendrite. It catalyses the reaction K(+)(in) = K(+)(out). It carries out the reaction Na(+)(in) = Na(+)(out). With respect to regulation, inhibited by NTS:NTSR1 signaling in dentate gyrus granule cells. In terms of biological role, k(+) channel that conducts voltage-dependent outward rectifying currents upon membrane depolarization. Voltage sensing is coupled to K(+) electrochemical gradient in an 'ion flux gating' mode where outward but not inward ion flow opens the gate. Changes ion selectivity and becomes permeable to Na(+) ions in response to extracellular acidification. Protonation of the pH sensor His-98 stabilizes C-type inactivation conformation likely converting the channel from outward K(+)-conducting, to inward Na(+)-conducting to nonconductive state. Homo- and heterodimerizes to form functional channels with distinct regulatory and gating properties. Allows K(+) currents with fast-gating kinetics important for the repolarization and hyperpolarization phases of action potentials. In granule neurons, hyperpolarizes the resting membrane potential to limit intrinsic neuronal excitability, but once the action potential threshold is reached, supports high-frequency action potential firing and increased neuronal excitability. Homomeric and/or heteromeric KCNK3:KCNK9 channels operate in cerebellar granule cells, whereas heteromeric KCNK1:KCNK9 enables currents in hippocampal dentate gyrus granule neurons. Dispensable for central chemosensory respiration i.e. breathing controlled by brainstem CO2/pH, it rather conducts pH-sensitive currents and controls the firing rate of serotonergic raphe neurons involved in potentiation of the respiratory chemoreflex. In retinal ganglion cells, mediates outward rectifying currents that regulate action potentials in response to acidification of the synaptic cleft. Involved in transmission of image-forming and nonimage-forming visual information in the retina. In adrenal gland, contributes to the maintenance of a hyperpolarized resting membrane potential of aldosterone-producing cells at zona glomerulosa and limits aldosterone release as part of a regulatory mechanism that controls arterial blood pressure and electrolyte homeostasis. The polypeptide is Potassium channel subfamily K member 9 (Mus musculus (Mouse)).